A 711-amino-acid polypeptide reads, in one-letter code: MFNKVTKTFQYGQHQVTLETGEIARQASGAVLVSIEDTVVLATVVAKKDAKPGQDFFPLTVDYVEKTYAAGRIPGGFFKREGRPSEKETLTSRLIDRPIRPLFPEGYLNEVQIIIHVMSVNPEIDPDIAAMIGASAALSVAGIPFAGPVGAARVGYIDGQYVLNPTTSQLAKSDLDLVVAGTEIAVLMVESEAKQLSEEVMLGAVVFGHEQMKAVIDAIHDLVRDGGKPEVQWSPAPKNEALISRVAHFAEAKLRAAYQTKDKQARTTKLKDAFAEVNNELAAEAASIGAAAPDTAEVGNILFDLEAKIVRSQILEGEPRIDGRDTRTVRPITIRTGVLPRTHGSALFTRGETQALVIATLGTARDEQKIDALMGEYSDRFMLHYNMPPFATGETGRVGTPKRREIGHGRLAKRALVAALPAPEDFSYSVRLVSEITESNGSSSMASVCGGCLALMDAGVPMQSHVAGIAMGLIKEGSKFAVLTDILGDEDHLGDMDFKVAGTANGITALQMDIKIQGITKEIMQVALAQAKEGRVHILGEMEKAVPSGTTGELSDFAPRLITIKINPEKIRDVIGKGGAVIRALTEETGTQIDISDEGVVTIASVDAAAGQEAKRRIEELTASVEVGKIYEGTVLKLLDFGAIVQVMPGKDGLLHISQIANERVNAVADYLQEGQQVRVKVLETDDRGRLKLSMKAAVAEENPEPAAAQE.

Residues Asp-491 and Asp-497 each coordinate Mg(2+). The 60-residue stretch at 559–618 (PRLITIKINPEKIRDVIGKGGAVIRALTEETGTQIDISDEGVVTIASVDAAAGQEAKRRI) folds into the KH domain. The region spanning 628–696 (GKIYEGTVLK…DRGRLKLSMK (69 aa)) is the S1 motif domain.

This sequence belongs to the polyribonucleotide nucleotidyltransferase family. Mg(2+) is required as a cofactor.

It is found in the cytoplasm. The catalysed reaction is RNA(n+1) + phosphate = RNA(n) + a ribonucleoside 5'-diphosphate. In terms of biological role, involved in mRNA degradation. Catalyzes the phosphorolysis of single-stranded polyribonucleotides processively in the 3'- to 5'-direction. This is Polyribonucleotide nucleotidyltransferase from Janthinobacterium sp. (strain Marseille) (Minibacterium massiliensis).